Reading from the N-terminus, the 54-residue chain is Chymosin (54 aa).

Residues 1–27 (SEITRVPLHKGKSLRKALKEHGLLEBF) constitute a propeptide, activation peptide.

This sequence belongs to the peptidase A1 family. Monomer.

The enzyme catalyses Broad specificity similar to that of pepsin A. Clots milk by cleavage of a single 104-Ser-Phe-|-Met-Ala-107 bond in kappa-chain of casein.. In terms of biological role, chymosin is synthesized in the mucosa of the stomach. The enzyme hydrolyzes casein to paracasein. The polypeptide is Chymosin (CYM) (Felis catus (Cat)).